A 159-amino-acid polypeptide reads, in one-letter code: Small ribosomal subunit protein uS9 (159 aa).

The protein belongs to the universal ribosomal protein uS9 family.

The sequence is that of Small ribosomal subunit protein uS9 from Methylocella silvestris (strain DSM 15510 / CIP 108128 / LMG 27833 / NCIMB 13906 / BL2).